Here is a 177-residue protein sequence, read N- to C-terminus: ATP synthase subunit b (177 aa).

A helical transmembrane segment spans residues 19 to 39 (LFPNLPNFIAHVIATIVLVVI).

This sequence belongs to the ATPase B chain family. In terms of assembly, F-type ATPases have 2 components, F(1) - the catalytic core - and F(0) - the membrane proton channel. F(1) has five subunits: alpha(3), beta(3), gamma(1), delta(1), epsilon(1). F(0) has three main subunits: a(1), b(2) and c(10-14). The alpha and beta chains form an alternating ring which encloses part of the gamma chain. F(1) is attached to F(0) by a central stalk formed by the gamma and epsilon chains, while a peripheral stalk is formed by the delta and b chains.

The protein resides in the cell membrane. Its function is as follows. F(1)F(0) ATP synthase produces ATP from ADP in the presence of a proton or sodium gradient. F-type ATPases consist of two structural domains, F(1) containing the extramembraneous catalytic core and F(0) containing the membrane proton channel, linked together by a central stalk and a peripheral stalk. During catalysis, ATP synthesis in the catalytic domain of F(1) is coupled via a rotary mechanism of the central stalk subunits to proton translocation. Component of the F(0) channel, it forms part of the peripheral stalk, linking F(1) to F(0). In Mesoplasma florum (strain ATCC 33453 / NBRC 100688 / NCTC 11704 / L1) (Acholeplasma florum), this protein is ATP synthase subunit b.